The primary structure comprises 204 residues: Crossover junction endodeoxyribonuclease RuvC (204 aa).

Catalysis depends on residues D7, E68, and D141. The Mg(2+) site is built by D7, E68, and D141.

Belongs to the RuvC family. Homodimer which binds Holliday junction (HJ) DNA. The HJ becomes 2-fold symmetrical on binding to RuvC with unstacked arms; it has a different conformation from HJ DNA in complex with RuvA. In the full resolvosome a probable DNA-RuvA(4)-RuvB(12)-RuvC(2) complex forms which resolves the HJ. Mg(2+) serves as cofactor.

The protein localises to the cytoplasm. It catalyses the reaction Endonucleolytic cleavage at a junction such as a reciprocal single-stranded crossover between two homologous DNA duplexes (Holliday junction).. Its function is as follows. The RuvA-RuvB-RuvC complex processes Holliday junction (HJ) DNA during genetic recombination and DNA repair. Endonuclease that resolves HJ intermediates. Cleaves cruciform DNA by making single-stranded nicks across the HJ at symmetrical positions within the homologous arms, yielding a 5'-phosphate and a 3'-hydroxyl group; requires a central core of homology in the junction. The consensus cleavage sequence is 5'-(A/T)TT(C/G)-3'. Cleavage occurs on the 3'-side of the TT dinucleotide at the point of strand exchange. HJ branch migration catalyzed by RuvA-RuvB allows RuvC to scan DNA until it finds its consensus sequence, where it cleaves and resolves the cruciform DNA. This is Crossover junction endodeoxyribonuclease RuvC from Clavibacter sepedonicus (Clavibacter michiganensis subsp. sepedonicus).